Reading from the N-terminus, the 108-residue chain is SPbeta prophage-derived uncharacterized HTH-type transcriptional regulator YonR (108 aa).

The HTH cro/C1-type domain occupies 6–60 (LKKCRTSKGYSQQRMADFLGITRQGYGKYEIGKAEPDLKTLTKLSNILGVSTDFL). Positions 17–36 (QQRMADFLGITRQGYGKYEI) form a DNA-binding region, H-T-H motif.

The polypeptide is SPbeta prophage-derived uncharacterized HTH-type transcriptional regulator YonR (yonR) (Bacillus subtilis (strain 168)).